Here is a 314-residue protein sequence, read N- to C-terminus: Polyadenylate-binding protein-interacting protein 8 (314 aa).

The interval 1-47 (MAAITEMATDSNDVINDGGTGDGIEKSTDSKPEIESDDLKPKSKPEY) is disordered. Residues 23-47 (GIEKSTDSKPEIESDDLKPKSKPEY) are compositionally biased toward basic and acidic residues. The short motif at 59–69 (KLNPEAKEFFP) is the PAM2-like element. The short motif at 99 to 112 (RRRRNNYNQGRRVR) is the Bipartite nuclear localization signal element. RRM domains follow at residues 128-203 (RTVY…PSKT) and 225-301 (RTIY…PSKT).

Interacts with MPC. In terms of tissue distribution, expressed in cauline leaves, stems, rosette leaves, immature siliques and primary inflorescences but at a low level.

The protein resides in the nucleus. This is Polyadenylate-binding protein-interacting protein 8 (CID8) from Arabidopsis thaliana (Mouse-ear cress).